We begin with the raw amino-acid sequence, 375 residues long: Tyrosine--tRNA ligase (375 aa).

The L-tyrosine site is built by Tyr37, Tyr168, Gln172, Asp175, and Gln190. The 'KMSKS' region motif lies at 251–255 (KMSKS). Lys254 serves as a coordination point for ATP.

The protein belongs to the class-I aminoacyl-tRNA synthetase family. TyrS type 4 subfamily. Homodimer.

The protein localises to the cytoplasm. It catalyses the reaction tRNA(Tyr) + L-tyrosine + ATP = L-tyrosyl-tRNA(Tyr) + AMP + diphosphate + H(+). Catalyzes the attachment of tyrosine to tRNA(Tyr) in a two-step reaction: tyrosine is first activated by ATP to form Tyr-AMP and then transferred to the acceptor end of tRNA(Tyr). In Thermococcus sibiricus (strain DSM 12597 / MM 739), this protein is Tyrosine--tRNA ligase.